Reading from the N-terminus, the 26-residue chain is Dermaseptin-B5 (26 aa).

Val26 is modified (valine amide).

This sequence belongs to the frog skin active peptide (FSAP) family. Dermaseptin subfamily. In terms of tissue distribution, expressed by the skin glands.

It is found in the secreted. Functionally, possesses a potent antimicrobial activity against Gram-positive and Gram-negative bacteria. Probably acts by disturbing membrane functions with its amphipathic structure. The polypeptide is Dermaseptin-B5 (Phyllomedusa bicolor (Two-colored leaf frog)).